Here is a 95-residue protein sequence, read N- to C-terminus: Large ribosomal subunit protein bL25 (95 aa).

Belongs to the bacterial ribosomal protein bL25 family. Part of the 50S ribosomal subunit; part of the 5S rRNA/L5/L18/L25 subcomplex. Contacts the 5S rRNA. Binds to the 5S rRNA independently of L5 and L18.

Functionally, this is one of the proteins that binds to the 5S RNA in the ribosome where it forms part of the central protuberance. The sequence is that of Large ribosomal subunit protein bL25 from Mannheimia succiniciproducens (strain KCTC 0769BP / MBEL55E).